Here is a 137-residue protein sequence, read N- to C-terminus: MYCTHLRMLQLVVMATLWVTPVRAGTHCRYGCRLNNMTITVEREDCHGSITITTCAGLCETTDLNYQSTWLPRSQGACNFKEWSYEEVYLEGCPPGANPFFIPVAKSCDCIKCKTDNTDCDRISMATPSCVVNPLEM.

The first 24 residues, 1–24, serve as a signal peptide directing secretion; sequence MYCTHLRMLQLVVMATLWVTPVRA. Intrachain disulfides connect Cys-32/Cys-78, Cys-46/Cys-93, Cys-55/Cys-108, Cys-59/Cys-110, and Cys-113/Cys-120. A glycan (N-linked (GlcNAc...) asparagine) is linked at Asn-36.

Belongs to the glycoprotein hormones subunit beta family. In terms of assembly, heterodimer of an alpha and a beta chain.

The protein resides in the secreted. Functionally, involved in gametogenesis and steroidogenesis. This Coregonus autumnalis (Arctic cisco) protein is Gonadotropin subunit beta-1 (cgba).